Reading from the N-terminus, the 348-residue chain is Anthranilate phosphoribosyltransferase (348 aa).

Residues G87, 90–91 (GD), T95, 97–100 (NIST), 115–123 (KHGNRSASG), and S127 contribute to the 5-phospho-alpha-D-ribose 1-diphosphate site. G87 contacts anthranilate. S99 is a binding site for Mg(2+). N118 contacts anthranilate. An anthranilate-binding site is contributed by R173. Mg(2+) is bound by residues D232 and E233.

This sequence belongs to the anthranilate phosphoribosyltransferase family. As to quaternary structure, homodimer. Requires Mg(2+) as cofactor.

The catalysed reaction is N-(5-phospho-beta-D-ribosyl)anthranilate + diphosphate = 5-phospho-alpha-D-ribose 1-diphosphate + anthranilate. The protein operates within amino-acid biosynthesis; L-tryptophan biosynthesis; L-tryptophan from chorismate: step 2/5. Its function is as follows. Catalyzes the transfer of the phosphoribosyl group of 5-phosphorylribose-1-pyrophosphate (PRPP) to anthranilate to yield N-(5'-phosphoribosyl)-anthranilate (PRA). The chain is Anthranilate phosphoribosyltransferase from Synechococcus sp. (strain CC9311).